The primary structure comprises 393 residues: Stearoyl-[acyl-carrier-protein] 9-desaturase, chloroplastic (393 aa).

Residues methionine 1 to methionine 30 constitute a chloroplast transit peptide. Glutamate 135, glutamate 173, histidine 176, glutamate 259, and histidine 262 together coordinate Fe cation.

It belongs to the fatty acid desaturase type 2 family. As to quaternary structure, homodimer. Fe(2+) is required as a cofactor.

Its subcellular location is the plastid. It localises to the chloroplast. The enzyme catalyses octadecanoyl-[ACP] + 2 reduced [2Fe-2S]-[ferredoxin] + O2 + 2 H(+) = (9Z)-octadecenoyl-[ACP] + 2 oxidized [2Fe-2S]-[ferredoxin] + 2 H2O. It functions in the pathway lipid metabolism; fatty acid metabolism. Its function is as follows. Converts stearoyl-ACP to oleoyl-ACP by introduction of a cis double bond between carbons 9 and 10 of the acyl chain. In Solanum tuberosum (Potato), this protein is Stearoyl-[acyl-carrier-protein] 9-desaturase, chloroplastic.